A 478-amino-acid polypeptide reads, in one-letter code: Serine/threonine-protein phosphatase 2A activator 1 (478 aa).

The interval 359–478 (DPSAIPPPSR…DITTKAPWAK (120 aa)) is disordered. Over residues 396-419 (APWATASQSTPPPSTGTAAPWATS) the composition is skewed to low complexity.

This sequence belongs to the PTPA-type PPIase family.

The protein localises to the cytoplasm. The protein resides in the nucleus. The catalysed reaction is [protein]-peptidylproline (omega=180) = [protein]-peptidylproline (omega=0). PPIases accelerate the folding of proteins. It catalyzes the cis-trans isomerization of proline imidic peptide bonds in oligopeptides. Acts as a regulatory subunit for PP2A-like phosphatases modulating their activity or substrate specificity, probably by inducing a conformational change in the catalytic subunit, a direct target of the PPIase. Can reactivate inactive phosphatase PP2A-phosphatase methylesterase complexes (PP2Ai) in presence of ATP and Mg(2+) by dissociating the inactive form from the complex. The sequence is that of Serine/threonine-protein phosphatase 2A activator 1 (rrd1) from Aspergillus oryzae (strain ATCC 42149 / RIB 40) (Yellow koji mold).